A 771-amino-acid polypeptide reads, in one-letter code: Probable exo-1,4-beta-xylosidase bxlB (771 aa).

Residues 1–25 (MVGLTPQHYGNAIALMTYLASTALA) form the signal peptide. Residue N67 is glycosylated (N-linked (GlcNAc...) asparagine). The active site involves D293. 5 N-linked (GlcNAc...) asparagine glycosylation sites follow: N305, N345, N423, N462, and N463.

The protein belongs to the glycosyl hydrolase 3 family.

It localises to the secreted. It catalyses the reaction Hydrolysis of (1-&gt;4)-beta-D-xylans, to remove successive D-xylose residues from the non-reducing termini.. Its pathway is glycan degradation; xylan degradation. Its function is as follows. Xylan 1,4-beta-xylosidase involved in the hydrolysis of xylan, a major structural heterogeneous polysaccharide found in plant biomass representing the second most abundant polysaccharide in the biosphere, after cellulose. In Aspergillus clavatus (strain ATCC 1007 / CBS 513.65 / DSM 816 / NCTC 3887 / NRRL 1 / QM 1276 / 107), this protein is Probable exo-1,4-beta-xylosidase bxlB (bxlB).